The sequence spans 610 residues: Glutamine--fructose-6-phosphate aminotransferase [isomerizing] (610 aa).

Cys-2 functions as the Nucleophile; for GATase activity in the catalytic mechanism. A Glutamine amidotransferase type-2 domain is found at 2–219; the sequence is CGIVGYAGKK…SGEWGYFSQN (218 aa). SIS domains are found at residues 287-431 and 459-600; these read SKDV…SDEE and MSSH…PDQP. Lys-605 acts as the For Fru-6P isomerization activity in catalysis.

As to quaternary structure, homodimer.

Its subcellular location is the cytoplasm. It carries out the reaction D-fructose 6-phosphate + L-glutamine = D-glucosamine 6-phosphate + L-glutamate. In terms of biological role, catalyzes the first step in hexosamine metabolism, converting fructose-6P into glucosamine-6P using glutamine as a nitrogen source. This Leptospira interrogans serogroup Icterohaemorrhagiae serovar copenhageni (strain Fiocruz L1-130) protein is Glutamine--fructose-6-phosphate aminotransferase [isomerizing].